Reading from the N-terminus, the 518-residue chain is E3 ubiquitin-protein ligase TRIM39 (518 aa).

Residues 29-70 form an RING-type zinc finger; the sequence is CSVCLEYLKEPVIIECGHNFCKACITRWWEDLERDFPCPVCR. The B box-type zinc-finger motif lies at 102 to 143; sequence RDESLCPQHHEALSLFCYEDQEAVCLICAISHTHRAHTVVPL. Zn(2+)-binding residues include Cys-107, His-110, Cys-129, and His-135. Residues 181–250 adopt a coiled-coil conformation; it reads ELKRLVESRR…AHLAAEVEGK (70 aa). Interaction with CDKN1A stretches follow at residues 268-337 and 389-518; these read KNIP…QLIA and TSGR…TDWE. Residues 319–514 enclose the B30.2/SPRY domain; it reads SNFPRQYFAL…NAAPLTIRPP (196 aa).

Belongs to the TRIM/RBCC family. In terms of assembly, isoform 1 interacts with MOAP1. Isoform 1 and isoform 2 interact with CDKN1A. Isoform 2 interacts (via domain B box-type) with CACTIN. Autoubiquitinated. In terms of tissue distribution, ubiquitous; highly expressed in brain, heart, kidney, liver, skeletal muscle, spleen and testis.

The protein localises to the cytoplasm. It localises to the cytosol. The protein resides in the mitochondrion. Its subcellular location is the nucleus. The enzyme catalyses S-ubiquitinyl-[E2 ubiquitin-conjugating enzyme]-L-cysteine + [acceptor protein]-L-lysine = [E2 ubiquitin-conjugating enzyme]-L-cysteine + N(6)-ubiquitinyl-[acceptor protein]-L-lysine.. The protein operates within protein modification; protein ubiquitination. Functionally, E3 ubiquitin-protein ligase. May facilitate apoptosis by inhibiting APC/C-Cdh1-mediated poly-ubiquitination and subsequent proteasome-mediated degradation of the pro-apoptotic protein MOAP1. Regulates the G1/S transition of the cell cycle and DNA damage-induced G2 arrest by stabilizing CDKN1A/p21. Positively regulates CDKN1A/p21 stability by competing with DTL for CDKN1A/p21 binding, therefore disrupting DCX(DTL) E3 ubiquitin ligase complex-mediated CDKN1A/p21 ubiquitination and degradation. Regulates the G1/S transition of the cell cycle and DNA damage-induced G2 arrest by stabilizing CDKN1A/p21. Positively regulates CDKN1A/p21 stability by competing with DTL for CDKN1A/p21 binding, therefore disrupting DCX(DTL) E3 ubiquitin ligase complex-mediated CDKN1A/p21 ubiquitination and degradation. Negatively regulates the canonical NF-kappa-B signaling pathway via stabilization of CACTIN in an ubiquitination-independent manner. This Homo sapiens (Human) protein is E3 ubiquitin-protein ligase TRIM39 (TRIM39).